Reading from the N-terminus, the 256-residue chain is UPF0246 protein HCH_04801 (256 aa).

This sequence belongs to the UPF0246 family.

The chain is UPF0246 protein HCH_04801 from Hahella chejuensis (strain KCTC 2396).